A 130-amino-acid polypeptide reads, in one-letter code: Phosphoribosyl-ATP pyrophosphatase (130 aa).

It belongs to the PRA-PH family.

The protein resides in the cytoplasm. The enzyme catalyses 1-(5-phospho-beta-D-ribosyl)-ATP + H2O = 1-(5-phospho-beta-D-ribosyl)-5'-AMP + diphosphate + H(+). Its pathway is amino-acid biosynthesis; L-histidine biosynthesis; L-histidine from 5-phospho-alpha-D-ribose 1-diphosphate: step 2/9. The protein is Phosphoribosyl-ATP pyrophosphatase of Albidiferax ferrireducens (strain ATCC BAA-621 / DSM 15236 / T118) (Rhodoferax ferrireducens).